The following is a 273-amino-acid chain: Dermonecrotic toxin LarSicTox-alphaIB1aiv (273 aa).

Histidine 5 is an active-site residue. Glutamate 25 and aspartate 27 together coordinate Mg(2+). Histidine 41 functions as the Nucleophile in the catalytic mechanism. 2 disulfide bridges follow: cysteine 45-cysteine 51 and cysteine 47-cysteine 190. Residue aspartate 85 coordinates Mg(2+). Asparagine 250 is a glycosylation site (N-linked (GlcNAc...) asparagine).

This sequence belongs to the arthropod phospholipase D family. Class II subfamily. Mg(2+) is required as a cofactor. In terms of tissue distribution, expressed by the venom gland.

The protein resides in the secreted. The catalysed reaction is an N-(acyl)-sphingosylphosphocholine = an N-(acyl)-sphingosyl-1,3-cyclic phosphate + choline. It catalyses the reaction an N-(acyl)-sphingosylphosphoethanolamine = an N-(acyl)-sphingosyl-1,3-cyclic phosphate + ethanolamine. It carries out the reaction a 1-acyl-sn-glycero-3-phosphocholine = a 1-acyl-sn-glycero-2,3-cyclic phosphate + choline. The enzyme catalyses a 1-acyl-sn-glycero-3-phosphoethanolamine = a 1-acyl-sn-glycero-2,3-cyclic phosphate + ethanolamine. In terms of biological role, dermonecrotic toxins cleave the phosphodiester linkage between the phosphate and headgroup of certain phospholipids (sphingolipid and lysolipid substrates), forming an alcohol (often choline) and a cyclic phosphate. This toxin acts on sphingomyelin (SM). It may also act on ceramide phosphoethanolamine (CPE), lysophosphatidylcholine (LPC) and lysophosphatidylethanolamine (LPE), but not on lysophosphatidylserine (LPS), and lysophosphatidylglycerol (LPG). It acts by transphosphatidylation, releasing exclusively cyclic phosphate products as second products. Induces dermonecrosis, hemolysis, increased vascular permeability, edema, inflammatory response, and platelet aggregation. The polypeptide is Dermonecrotic toxin LarSicTox-alphaIB1aiv (Loxosceles arizonica (Arizona brown spider)).